The primary structure comprises 341 residues: MNIEEFDYDLPESLIAQTPLKDRDHSRLLVMDRETGEMKHLHFKDIIEYFRPGDTLVLNDTRVMPARLFGLKEETGAKVEMLMLTQIEGNDWEVLLKPAKRIKVGNKLNFGNGKIIAECIKEMDQGGRIMRLHYEGILQERLDELGEMPLPPYIKERLDDPDRYQTVYAKESGSAAAPTAGLHFTDELLTEIKNKGVNIAFVTLHVGLGTFRPVSVDDVNDHEMHSEYYQMTQETADLLNDTKSKGHRIISVGTTSTRTLETIRRDHDKFVETSGWTNIFIYPGFDFKAIDGQITNFHLPKSTLVMLVSAFSTRENVLNAYKTAVNLEYRFFSFGDAMLII.

Belongs to the QueA family. As to quaternary structure, monomer.

The protein resides in the cytoplasm. It carries out the reaction 7-aminomethyl-7-carbaguanosine(34) in tRNA + S-adenosyl-L-methionine = epoxyqueuosine(34) in tRNA + adenine + L-methionine + 2 H(+). Its pathway is tRNA modification; tRNA-queuosine biosynthesis. Its function is as follows. Transfers and isomerizes the ribose moiety from AdoMet to the 7-aminomethyl group of 7-deazaguanine (preQ1-tRNA) to give epoxyqueuosine (oQ-tRNA). The chain is S-adenosylmethionine:tRNA ribosyltransferase-isomerase from Staphylococcus aureus (strain Mu3 / ATCC 700698).